A 219-amino-acid polypeptide reads, in one-letter code: Vesicle-associated membrane protein 711 (219 aa).

An N-acetylalanine modification is found at A2. Over 2–189 the chain is Cytoplasmic; the sequence is AILYALVARG…RSNVWWRNCK (188 aa). A Longin domain is found at 7–111; the sequence is LVARGTVVLS…AMNEEFSRVL (105 aa). One can recognise a v-SNARE coiled-coil homology domain in the interval 126 to 186; the sequence is RINRIKGEMN…RRFRSNVWWR (61 aa). Residues 190–210 traverse the membrane as a helical; Anchor for type IV membrane protein segment; the sequence is LTVLLILLLLVIIYIAVAFLC. Residues 211-219 lie on the Vesicular side of the membrane; the sequence is HGPTLPSCI.

This sequence belongs to the synaptobrevin family. Expressed in flowers, leaves, stems and roots.

It localises to the vacuole membrane. The protein resides in the prevacuolar compartment membrane. Its function is as follows. Involved in the targeting and/or fusion of transport vesicles to their target membrane. This chain is Vesicle-associated membrane protein 711, found in Arabidopsis thaliana (Mouse-ear cress).